The chain runs to 134 residues: C-C motif chemokine 21 (134 aa).

The N-terminal stretch at 1-23 is a signal peptide; it reads MAQSLALSLLILVLAFGIPRTQG. Disulfide bonds link cysteine 31/cysteine 57, cysteine 32/cysteine 75, and cysteine 103/cysteine 122. A disordered region spans residues 88 to 134; the sequence is QHLDKTPSPQKPAQGCRKDRGASKTGKKGKGSKGCKRTERSQTPKGP. Residues 98–134 form a C-terminal basic extension region; sequence KPAQGCRKDRGASKTGKKGKGSKGCKRTERSQTPKGP. Positions 112 to 122 are enriched in basic residues; that stretch reads TGKKGKGSKGC. The segment covering 123–134 has biased composition (basic and acidic residues); that stretch reads KRTERSQTPKGP.

This sequence belongs to the intercrine beta (chemokine CC) family. In terms of assembly, monomer. Binds to CCR7. Interacts with PDPN; relocalizes PDPN to the basolateral membrane. Interacts with TNFAIP6 (via Link domain). Interacts with GPR174. In terms of tissue distribution, highly expressed in high endothelial venules of lymph nodes, spleen and appendix. Intermediate levels found in small intestine, thyroid gland and trachea. Low level expression in thymus, bone marrow, liver, and pancreas. Also found in tonsil, fetal heart and fetal spleen.

Its subcellular location is the secreted. Its function is as follows. Inhibits hemopoiesis and stimulates chemotaxis. Chemotactic in vitro for thymocytes and activated T-cells, but not for B-cells, macrophages, or neutrophils. Shows preferential activity towards naive T-cells. May play a role in mediating homing of lymphocytes to secondary lymphoid organs. Binds to atypical chemokine receptor ACKR4 and mediates the recruitment of beta-arrestin (ARRB1/2) to ACKR4. This Homo sapiens (Human) protein is C-C motif chemokine 21 (CCL21).